The sequence spans 105 residues: Met repressor (105 aa).

This sequence belongs to the MetJ family. As to quaternary structure, homodimer.

It localises to the cytoplasm. In terms of biological role, this regulatory protein, when combined with SAM (S-adenosylmethionine) represses the expression of the methionine regulon and of enzymes involved in SAM synthesis. The chain is Met repressor from Histophilus somni (strain 129Pt) (Haemophilus somnus).